We begin with the raw amino-acid sequence, 219 residues long: Octanoyltransferase (219 aa).

In terms of domain architecture, BPL/LPL catalytic spans 31–206 (DEDVDQIWLV…ELVELLGYDQ (176 aa)). Residues 70–77 (RGGQVTYH), 137–139 (SLG), and 150–152 (GLA) contribute to the substrate site. Cysteine 168 acts as the Acyl-thioester intermediate in catalysis.

Belongs to the LipB family.

The protein localises to the cytoplasm. It catalyses the reaction octanoyl-[ACP] + L-lysyl-[protein] = N(6)-octanoyl-L-lysyl-[protein] + holo-[ACP] + H(+). It participates in protein modification; protein lipoylation via endogenous pathway; protein N(6)-(lipoyl)lysine from octanoyl-[acyl-carrier-protein]: step 1/2. In terms of biological role, catalyzes the transfer of endogenously produced octanoic acid from octanoyl-acyl-carrier-protein onto the lipoyl domains of lipoate-dependent enzymes. Lipoyl-ACP can also act as a substrate although octanoyl-ACP is likely to be the physiological substrate. This Vibrio atlanticus (strain LGP32) (Vibrio splendidus (strain Mel32)) protein is Octanoyltransferase.